The sequence spans 191 residues: Peptidyl-tRNA hydrolase (191 aa).

Tyrosine 14 is a binding site for tRNA. The Proton acceptor role is filled by histidine 19. Residues tyrosine 64, asparagine 66, and asparagine 112 each coordinate tRNA.

This sequence belongs to the PTH family. Monomer.

It localises to the cytoplasm. It catalyses the reaction an N-acyl-L-alpha-aminoacyl-tRNA + H2O = an N-acyl-L-amino acid + a tRNA + H(+). In terms of biological role, hydrolyzes ribosome-free peptidyl-tRNAs (with 1 or more amino acids incorporated), which drop off the ribosome during protein synthesis, or as a result of ribosome stalling. Its function is as follows. Catalyzes the release of premature peptidyl moieties from peptidyl-tRNA molecules trapped in stalled 50S ribosomal subunits, and thus maintains levels of free tRNAs and 50S ribosomes. The sequence is that of Peptidyl-tRNA hydrolase from Lachnoclostridium phytofermentans (strain ATCC 700394 / DSM 18823 / ISDg) (Clostridium phytofermentans).